The chain runs to 181 residues: Large ribosomal subunit protein uL5c (181 aa).

Belongs to the universal ribosomal protein uL5 family. Part of the 50S ribosomal subunit; contacts the 5S rRNA.

The protein resides in the plastid. It localises to the chloroplast. Its function is as follows. Binds 5S rRNA, forms part of the central protuberance of the 50S subunit. The protein is Large ribosomal subunit protein uL5c (rpl5) of Guillardia theta (Cryptophyte).